A 129-amino-acid polypeptide reads, in one-letter code: SPbeta prophage-derived protein NrdI (129 aa).

Belongs to the NrdI family.

Functionally, probably involved in ribonucleotide reductase function. The polypeptide is SPbeta prophage-derived protein NrdI (nrdIB) (Bacillus subtilis (strain 168)).